Reading from the N-terminus, the 439-residue chain is tRNA(Ile)-lysidine synthase (439 aa).

25-30 (SGGLDS) serves as a coordination point for ATP.

It belongs to the tRNA(Ile)-lysidine synthase family.

It localises to the cytoplasm. It carries out the reaction cytidine(34) in tRNA(Ile2) + L-lysine + ATP = lysidine(34) in tRNA(Ile2) + AMP + diphosphate + H(+). In terms of biological role, ligates lysine onto the cytidine present at position 34 of the AUA codon-specific tRNA(Ile) that contains the anticodon CAU, in an ATP-dependent manner. Cytidine is converted to lysidine, thus changing the amino acid specificity of the tRNA from methionine to isoleucine. This is tRNA(Ile)-lysidine synthase from Edwardsiella ictaluri (strain 93-146).